Reading from the N-terminus, the 436-residue chain is GTPase Der (436 aa).

EngA-type G domains follow at residues 3 to 168 (PLIA…PESD) and 177 to 352 (IRLA…QNRS). GTP-binding positions include 9–16 (GRPNVGKS), 56–60 (DTGGY), 120–123 (NKAE), 183–190 (GRPNVGKS), 230–234 (DTAGL), and 295–298 (NKWD). Positions 353-436 (RKISTSALNR…VTISLRFMQK (84 aa)) constitute a KH-like domain.

This sequence belongs to the TRAFAC class TrmE-Era-EngA-EngB-Septin-like GTPase superfamily. EngA (Der) GTPase family. As to quaternary structure, associates with the 50S ribosomal subunit.

Its function is as follows. GTPase that plays an essential role in the late steps of ribosome biogenesis. This is GTPase Der from Chlorobium luteolum (strain DSM 273 / BCRC 81028 / 2530) (Pelodictyon luteolum).